Here is a 333-residue protein sequence, read N- to C-terminus: CRISPR-associated endonuclease Cas1 (333 aa).

Positions 162, 226, and 241 each coordinate Mn(2+).

Belongs to the CRISPR-associated endonuclease Cas1 family. As to quaternary structure, homodimer, forms a heterotetramer with a Cas2 homodimer. Mg(2+) is required as a cofactor. Requires Mn(2+) as cofactor.

Functionally, CRISPR (clustered regularly interspaced short palindromic repeat), is an adaptive immune system that provides protection against mobile genetic elements (viruses, transposable elements and conjugative plasmids). CRISPR clusters contain spacers, sequences complementary to antecedent mobile elements, and target invading nucleic acids. CRISPR clusters are transcribed and processed into CRISPR RNA (crRNA). Acts as a dsDNA endonuclease. Involved in the integration of spacer DNA into the CRISPR cassette. The polypeptide is CRISPR-associated endonuclease Cas1 (Nanoarchaeum equitans (strain Kin4-M)).